Here is a 109-residue protein sequence, read N- to C-terminus: ATP synthase subunit c (109 aa).

A run of 2 helical transmembrane segments spans residues 42 to 62 and 88 to 108; these read YIGTGITMLAAGAVGLMQGFS and LALAEAVAIYALIVSILIIFV.

This sequence belongs to the ATPase C chain family. In terms of assembly, F-type ATPases have 2 components, F(1) - the catalytic core - and F(0) - the membrane proton channel. F(1) has five subunits: alpha(3), beta(3), gamma(1), delta(1), epsilon(1). F(0) has three main subunits: a(1), b(2) and c(10-14). The alpha and beta chains form an alternating ring which encloses part of the gamma chain. F(1) is attached to F(0) by a central stalk formed by the gamma and epsilon chains, while a peripheral stalk is formed by the delta and b chains.

The protein resides in the cell membrane. F(1)F(0) ATP synthase produces ATP from ADP in the presence of a proton or sodium gradient. F-type ATPases consist of two structural domains, F(1) containing the extramembraneous catalytic core and F(0) containing the membrane proton channel, linked together by a central stalk and a peripheral stalk. During catalysis, ATP synthesis in the catalytic domain of F(1) is coupled via a rotary mechanism of the central stalk subunits to proton translocation. Its function is as follows. Key component of the F(0) channel; it plays a direct role in translocation across the membrane. A homomeric c-ring of between 10-14 subunits forms the central stalk rotor element with the F(1) delta and epsilon subunits. The polypeptide is ATP synthase subunit c (Ureaplasma urealyticum serovar 10 (strain ATCC 33699 / Western)).